A 243-amino-acid polypeptide reads, in one-letter code: UPF0758 protein Ava_0172 (243 aa).

Residues 113-235 form the MPN domain; it reads PIDSPVAAVA…HQSLREVTTL (123 aa). Zn(2+)-binding residues include histidine 184, histidine 186, and aspartate 197. The JAMM motif signature appears at 184–197; the sequence is HNHPSGNVEPSPED.

This sequence belongs to the UPF0758 family.

This chain is UPF0758 protein Ava_0172, found in Trichormus variabilis (strain ATCC 29413 / PCC 7937) (Anabaena variabilis).